Here is a 96-residue protein sequence, read N- to C-terminus: Co-chaperonin GroES (96 aa).

This sequence belongs to the GroES chaperonin family. As to quaternary structure, heptamer of 7 subunits arranged in a ring. Interacts with the chaperonin GroEL.

Its subcellular location is the cytoplasm. Functionally, together with the chaperonin GroEL, plays an essential role in assisting protein folding. The GroEL-GroES system forms a nano-cage that allows encapsulation of the non-native substrate proteins and provides a physical environment optimized to promote and accelerate protein folding. GroES binds to the apical surface of the GroEL ring, thereby capping the opening of the GroEL channel. The protein is Co-chaperonin GroES of Methylobacterium radiotolerans (strain ATCC 27329 / DSM 1819 / JCM 2831 / NBRC 15690 / NCIMB 10815 / 0-1).